A 232-amino-acid polypeptide reads, in one-letter code: Small ribosomal subunit protein uS2 (232 aa).

This sequence belongs to the universal ribosomal protein uS2 family.

This chain is Small ribosomal subunit protein uS2, found in Heliobacterium modesticaldum (strain ATCC 51547 / Ice1).